A 1113-amino-acid chain; its full sequence is Cytospin-A (1113 aa).

The tract at residues 1 to 160 (MKKSVRPAAS…KSKSDGQISD (160 aa)) is disordered. Over residues 59-103 (ASCNAVSKSKRTTSVGTTASTLDSKPKTASGTTSKRLASSLSKET) the composition is skewed to polar residues. Residues 145-154 (SEGRMSKSKS) show a composition bias toward basic and acidic residues. The stretch at 220-259 (AADVESTLILLQEQNQAIREELNLLKSENRMLKDRLNALG) forms a coiled coil. The interval 284–374 (AGSGQSDGGG…RRGSSGNASE (91 aa)) is disordered. Positions 338–358 (SSDDALDAPSGASSSSESECA) are enriched in low complexity. 2 coiled-coil regions span residues 379 to 433 (CLTE…MDSL) and 473 to 791 (MELE…RGRV). 4 disordered regions span residues 766–785 (QEKNEKLSKELEEVKSRKQD), 832–902 (FDSA…PTYP), 914–957 (GSAA…DGAS), and 972–997 (ALASSSPTASVTPTTRSRLREERKDP). Residues 834–845 (SASQGPPSSGAS) are compositionally biased toward low complexity. A compositionally biased stretch (pro residues) spans 856–867 (PRTPLSPSPMKT). A compositionally biased stretch (polar residues) spans 925–940 (QRVSNMDSTKAISVSR). A compositionally biased stretch (basic and acidic residues) spans 941–951 (RSSEEMKRDMA). Residues 972–981 (ALASSSPTAS) show a composition bias toward low complexity. The Calponin-homology (CH) domain occupies 1007–1112 (GSKRNALLKW…YVTAIYKYFE (106 aa)).

This sequence belongs to the cytospin-A family. As to quaternary structure, may interact with both microtubules and actin cytoskeleton.

The protein localises to the cytoplasm. It localises to the cytoskeleton. The protein resides in the spindle. It is found in the cell junction. Its subcellular location is the gap junction. In terms of biological role, involved in cytokinesis and spindle organization. May play a role in actin cytoskeleton organization and microtubule stabilization and hence required for proper cell adhesion and migration. In Tetraodon nigroviridis (Spotted green pufferfish), this protein is Cytospin-A (specc1l).